The following is a 475-amino-acid chain: Putative amidase AmiD (475 aa).

Residues Lys93 and Ser166 each act as charge relay system in the active site. Ser190 acts as the Acyl-ester intermediate in catalysis.

Belongs to the amidase family.

The enzyme catalyses a monocarboxylic acid amide + H2O = a monocarboxylate + NH4(+). The chain is Putative amidase AmiD (amiD) from Mycobacterium bovis (strain ATCC BAA-935 / AF2122/97).